The chain runs to 175 residues: Auxin-responsive protein IAA28 (175 aa).

A disordered region spans residues 1 to 39 (MEEEKRLELRLAPPCHQFTSNNNINGSKQKSSTKETSFL). Residues 7-11 (LELRL) carry the EAR-like (transcriptional repression) motif. The segment covering 17–39 (QFTSNNNINGSKQKSSTKETSFL) has biased composition (polar residues). Positions 80–161 (ELYVKINMEG…TVKRLHVLKT (82 aa)) constitute a PB1 domain.

The protein belongs to the Aux/IAA family. In terms of assembly, homodimers and heterodimers. Interacts with TPL. In roots and inflorescence stems.

The protein resides in the nucleus. In terms of biological role, aux/IAA proteins are short-lived transcriptional factors that function as repressors of early auxin response genes at low auxin concentrations. Repression is thought to result from the interaction with auxin response factors (ARFs), proteins that bind to the auxin-responsive promoter element (AuxRE). Formation of heterodimers with ARF proteins may alter their ability to modulate early auxin response genes expression. The sequence is that of Auxin-responsive protein IAA28 (IAA28) from Arabidopsis thaliana (Mouse-ear cress).